The sequence spans 128 residues: UPF0102 protein RPB_0420 (128 aa).

This sequence belongs to the UPF0102 family.

This Rhodopseudomonas palustris (strain HaA2) protein is UPF0102 protein RPB_0420.